We begin with the raw amino-acid sequence, 194 residues long: Endonuclease V (194 aa).

Residues D31 and E95 each coordinate Mg(2+).

This sequence belongs to the endonuclease V family. The cofactor is Mg(2+).

The protein localises to the cytoplasm. The catalysed reaction is Endonucleolytic cleavage at apurinic or apyrimidinic sites to products with a 5'-phosphate.. In terms of biological role, DNA repair enzyme involved in the repair of deaminated bases. Selectively cleaves double-stranded DNA at the second phosphodiester bond 3' to a deoxyinosine leaving behind the intact lesion on the nicked DNA. This chain is Endonuclease V, found in Pyrococcus abyssi (strain GE5 / Orsay).